Reading from the N-terminus, the 477-residue chain is ETS translocation variant 1 (477 aa).

Position 94 is a phosphoserine (serine 94). A disordered region spans residues 128 to 179; the sequence is PQVGMRPSNPPTPSSTPVSPLHHASPNSTHTPKPDRAFPAHLPPSQSIPDSS. Phosphoserine; by RPS6KA1 and RPS6KA5 occurs at positions 191 and 216. Residue lysine 317 forms a Glycyl lysine isopeptide (Lys-Gly) (interchain with G-Cter in SUMO2) linkage. A DNA-binding region (ETS) is located at residues 335–415; sequence LQLWQFLVAL…AGERYVYKFV (81 aa).

The protein belongs to the ETS family. Sumoylated. Post-translationally, phosphorylated at Ser-191 and Ser-216 by RPS6KA1 and RPS6KA5; phosphorylation activates transcriptional activity. In terms of tissue distribution, very highly expressed in brain, highly expressed in testis, lung and heart, moderately in spleen, small intestine, pancreas and colon, weakly in liver, prostate and thymus, very weakly in skeletal muscle, kidney and ovary and not in placenta and peripheral blood leukocytes.

The protein localises to the nucleus. Its function is as follows. Transcriptional activator that binds to DNA sequences containing the consensus pentanucleotide 5'-CGGA[AT]-3'. Required for olfactory dopaminergic neuron differentiation; may directly activate expression of tyrosine hydroxylase (TH). The protein is ETS translocation variant 1 of Homo sapiens (Human).